The primary structure comprises 360 residues: GTPase Obg (360 aa).

In terms of domain architecture, Obg spans methionine 1–isoleucine 156. Positions alanine 157 to proline 360 constitute an OBG-type G domain. GTP contacts are provided by residues glycine 163 to serine 170, phenylalanine 188 to valine 192, aspartate 210 to glycine 213, asparagine 279 to aspartate 282, and serine 341 to valine 343. Mg(2+)-binding residues include serine 170 and threonine 190.

This sequence belongs to the TRAFAC class OBG-HflX-like GTPase superfamily. OBG GTPase family. As to quaternary structure, monomer. Mg(2+) is required as a cofactor.

It is found in the cytoplasm. In terms of biological role, an essential GTPase which binds GTP, GDP and possibly (p)ppGpp with moderate affinity, with high nucleotide exchange rates and a fairly low GTP hydrolysis rate. Plays a role in control of the cell cycle, stress response, ribosome biogenesis and in those bacteria that undergo differentiation, in morphogenesis control. This is GTPase Obg from Helicobacter pylori (strain G27).